A 271-amino-acid polypeptide reads, in one-letter code: Neurexophilin-1 (271 aa).

Positions 1–21 (MQAACWYVLLLLQPTIYLVTC) are cleaved as a signal peptide. The tract at residues 22–97 (ANLTNGGKSE…WDWLRNSTDL (76 aa)) is II. N-linked (GlcNAc...) asparagine glycosylation is found at Asn23, Asn68, Asn93, Asn146, Asn156, and Asn162. Residues 98–176 (QEPRPRAKRR…LVPPTKIVEF (79 aa)) are III. Positions 177–185 (DLAQQTVID) are IV (linker domain). The tract at residues 186–271 (AKDSKSFNCR…HSDTPYFPSG (86 aa)) is v (Cys-rich).

It belongs to the neurexophilin family.

The protein resides in the secreted. In terms of biological role, may be signaling molecules that resemble neuropeptides and that act by binding to alpha-neurexins and possibly other receptors. This Pongo abelii (Sumatran orangutan) protein is Neurexophilin-1 (NXPH1).